Reading from the N-terminus, the 355-residue chain is Histidinol-phosphate aminotransferase (355 aa).

The residue at position 218 (lysine 218) is an N6-(pyridoxal phosphate)lysine.

This sequence belongs to the class-II pyridoxal-phosphate-dependent aminotransferase family. Histidinol-phosphate aminotransferase subfamily. Homodimer. Requires pyridoxal 5'-phosphate as cofactor.

The enzyme catalyses L-histidinol phosphate + 2-oxoglutarate = 3-(imidazol-4-yl)-2-oxopropyl phosphate + L-glutamate. The protein operates within amino-acid biosynthesis; L-histidine biosynthesis; L-histidine from 5-phospho-alpha-D-ribose 1-diphosphate: step 7/9. The polypeptide is Histidinol-phosphate aminotransferase (Chlorobaculum parvum (strain DSM 263 / NCIMB 8327) (Chlorobium vibrioforme subsp. thiosulfatophilum)).